A 376-amino-acid polypeptide reads, in one-letter code: Chaperone protein DnaJ (376 aa).

One can recognise a J domain in the interval 4-68 (DYYEILGVAR…ETRARYDRFG (65 aa)). The tract at residues 102–121 (GGMGGPTQQRRRGGPARGDD) is disordered. The segment at 136 to 218 (GGEKEIRISH…CDGKGTNQVT (83 aa)) adopts a CR-type zinc-finger fold. Cys149, Cys152, Cys166, Cys169, Cys192, Cys195, Cys206, and Cys209 together coordinate Zn(2+). CXXCXGXG motif repeat units lie at residues 149–156 (CETCSGSG), 166–173 (CSTCSGSG), 192–199 (CPTCNGTG), and 206–213 (CDACDGKG).

This sequence belongs to the DnaJ family. Homodimer. The cofactor is Zn(2+).

Its subcellular location is the cytoplasm. Its function is as follows. Participates actively in the response to hyperosmotic and heat shock by preventing the aggregation of stress-denatured proteins and by disaggregating proteins, also in an autonomous, DnaK-independent fashion. Unfolded proteins bind initially to DnaJ; upon interaction with the DnaJ-bound protein, DnaK hydrolyzes its bound ATP, resulting in the formation of a stable complex. GrpE releases ADP from DnaK; ATP binding to DnaK triggers the release of the substrate protein, thus completing the reaction cycle. Several rounds of ATP-dependent interactions between DnaJ, DnaK and GrpE are required for fully efficient folding. Also involved, together with DnaK and GrpE, in the DNA replication of plasmids through activation of initiation proteins. This Trichormus variabilis (strain ATCC 29413 / PCC 7937) (Anabaena variabilis) protein is Chaperone protein DnaJ.